Reading from the N-terminus, the 114-residue chain is PDZK1-interacting protein 1 (114 aa).

Topologically, residues 1–28 (MSVLSLVVLSLLMALPPASCQQGRGNLQ) are extracellular. The helical transmembrane segment at 29-51 (PWMQGLIAVAVFLVLVAIAFAVN) threads the bilayer. Topologically, residues 52–114 (HFWCQEKPAP…EEGKVCSTPM (63 aa)) are cytoplasmic. The residue at position 85 (serine 85) is a Phosphoserine.

This sequence belongs to the PDZK1-interacting protein 1/SMIM24 family. Forms a heterodimer (via N-terminal transmembrane helix) with SLC5A2/SGLT2 (via TM13); this interaction enhances SLC5A2 transporter activity. Interacts with PDZK1.

Its subcellular location is the apical cell membrane. Auxiliary protein of electrogenic Na(+)-coupled sugar symporter SLC5A2/SGLT2 and SLC5A1/SGLT1. Essential for the transporter activity of SLC5A2/SGLT2 but not SLC5A1/SGLT1. This chain is PDZK1-interacting protein 1, found in Bos taurus (Bovine).